Reading from the N-terminus, the 181-residue chain is uncharacterized protein (181 aa).

The tract at residues 151–181 is disordered; it reads AQKKKDFQEPENKHEQLTSTKAPCQENWSDF. Over residues 154 to 166 the composition is skewed to basic and acidic residues; that stretch reads KKDFQEPENKHEQ. The segment covering 167 to 181 has biased composition (polar residues); the sequence is LTSTKAPCQENWSDF.

This is an uncharacterized protein from Caenorhabditis elegans.